An 89-amino-acid chain; its full sequence is Small ribosomal subunit protein uS14A (89 aa).

This sequence belongs to the universal ribosomal protein uS14 family. In terms of assembly, part of the 30S ribosomal subunit. Contacts proteins S3 and S10.

Its function is as follows. Binds 16S rRNA, required for the assembly of 30S particles and may also be responsible for determining the conformation of the 16S rRNA at the A site. The sequence is that of Small ribosomal subunit protein uS14A from Bacillus pumilus (strain SAFR-032).